The chain runs to 265 residues: Methyl-coenzyme M reductase II subunit gamma (265 aa).

Arg123 provides a ligand contact to coenzyme M.

Belongs to the methyl-coenzyme M reductase gamma subunit family. MCR is a hexamer of two alpha, two beta, and two gamma chains, forming a dimer of heterotrimers. The cofactor is coenzyme F430.

The catalysed reaction is coenzyme B + methyl-coenzyme M = methane + coenzyme M-coenzyme B heterodisulfide. It participates in one-carbon metabolism; methyl-coenzyme M reduction; methane from methyl-coenzyme M: step 1/1. Functionally, component of the methyl-coenzyme M reductase (MCR) I that catalyzes the reductive cleavage of methyl-coenzyme M (CoM-S-CH3 or 2-(methylthio)ethanesulfonate) using coenzyme B (CoB or 7-mercaptoheptanoylthreonine phosphate) as reductant which results in the production of methane and the mixed heterodisulfide of CoB and CoM (CoM-S-S-CoB). This is the final step in methanogenesis. This Methanothermobacter thermautotrophicus (strain ATCC 29096 / DSM 1053 / JCM 10044 / NBRC 100330 / Delta H) (Methanobacterium thermoautotrophicum) protein is Methyl-coenzyme M reductase II subunit gamma (mrtG).